A 129-amino-acid chain; its full sequence is Ribosome-binding factor A (129 aa).

The protein belongs to the RbfA family. As to quaternary structure, monomer. Binds 30S ribosomal subunits, but not 50S ribosomal subunits or 70S ribosomes.

The protein resides in the cytoplasm. In terms of biological role, one of several proteins that assist in the late maturation steps of the functional core of the 30S ribosomal subunit. Associates with free 30S ribosomal subunits (but not with 30S subunits that are part of 70S ribosomes or polysomes). Required for efficient processing of 16S rRNA. May interact with the 5'-terminal helix region of 16S rRNA. The chain is Ribosome-binding factor A from Marinomonas sp. (strain MWYL1).